A 317-amino-acid chain; its full sequence is Olfactory receptor 5K17 (317 aa).

The Extracellular portion of the chain corresponds to 1 to 28 (MMKANHSLTVEFILIGFSDHTDLKTLLF). A glycan (N-linked (GlcNAc...) asparagine) is linked at Asn5. A helical transmembrane segment spans residues 29–49 (LLFSAIYLVTIVGNLGLVALI). Residues 50 to 56 (YMEPRLH) are Cytoplasmic-facing. Residues 57–77 (TPMYIFLGNLALMDSCCSCAI) traverse the membrane as a helical segment. Topologically, residues 78–93 (TPKMLENFFSVDRRIS) are extracellular. A helical transmembrane segment spans residues 94–114 (LYECMVQFYFLCLAETADCFL). The cysteines at positions 97 and 189 are disulfide-linked. The Cytoplasmic segment spans residues 115–144 (LAAMAYDRYVAICNPLQYHTMMSKKLSIQM). Residues 145-165 (SIGTFIASNLHSLIHTGCLLR) form a helical membrane-spanning segment. At 166–198 (LNFCKSRRIDHFFCDILPLYKLSCTDPFINELM) the chain is on the extracellular side. Residues 199 to 219 (LYIFSMPIQVFTITTVLVSYS) traverse the membrane as a helical segment. Residues 220–239 (CILLTVFKMKSKDGRGKAFS) are Cytoplasmic-facing. The chain crosses the membrane as a helical span at residues 240-259 (TCASHFFSVSIFYICLLMYI). Over 260–268 (GPSKNSNKD) the chain is Extracellular. The chain crosses the membrane as a helical span at residues 269–289 (IPVGVFYTIVIPLLNPFIYSL). The Cytoplasmic portion of the chain corresponds to 290-317 (RNKEVVNAVKKVMKTHSIFKNSSASIAH).

Belongs to the G-protein coupled receptor 1 family.

It localises to the cell membrane. In terms of biological role, potential odorant receptor. This chain is Olfactory receptor 5K17, found in Mus musculus (Mouse).